The following is a 100-amino-acid chain: NADH-quinone oxidoreductase subunit K (100 aa).

3 helical membrane-spanning segments follow: residues 1–21, 28–48, and 64–84; these read MIGL…GLAG, ILLL…GFVA, and FIIA…ILWF.

The protein belongs to the complex I subunit 4L family. As to quaternary structure, NDH-1 is composed of 14 different subunits. Subunits NuoA, H, J, K, L, M, N constitute the membrane sector of the complex.

Its subcellular location is the cell inner membrane. It carries out the reaction a quinone + NADH + 5 H(+)(in) = a quinol + NAD(+) + 4 H(+)(out). NDH-1 shuttles electrons from NADH, via FMN and iron-sulfur (Fe-S) centers, to quinones in the respiratory chain. The immediate electron acceptor for the enzyme in this species is believed to be ubiquinone. Couples the redox reaction to proton translocation (for every two electrons transferred, four hydrogen ions are translocated across the cytoplasmic membrane), and thus conserves the redox energy in a proton gradient. The chain is NADH-quinone oxidoreductase subunit K from Helicobacter pylori (strain P12).